A 216-amino-acid chain; its full sequence is MAAQGEPQVQFKVVLVGDGGTGKTTFMKRHLTGEFEKEYVATLGVEVHTLVFHTNRGPIKFNVWDTAGQEKFGGLRDGYYIQAQCAIIMFDVTSRVTYKNVPSWHKDLVRVCENIPIVLCGNKVDVKDMKVKAKPILFHRKKNLQYYDISARSNYNFEKPFFWLARKLIGDPNLEFVAMPALAPPEVVMDPALAAQYEHDLEVAQTTALPDEEDDL.

Ala-2 bears the N-acetylalanine mark. A Small GTPase Ran-type domain is found at 7–171; that stretch reads PQVQFKVVLV…FWLARKLIGD (165 aa). 17-24 is a GTP binding site; sequence GDGGTGKT. The residue at position 24 (Thr-24) is a Phosphothreonine. Residues 37–45 form a switch-I region; sequence KEYVATLGV. Lys-60 is subject to N6-acetyllysine. Residue 65 to 69 coordinates GTP; that stretch reads DTAGQ. The interval 68-84 is switch-II; the sequence is GQEKFGGLRDGYYIQAQ. At Lys-71 the chain carries N6-acetyllysine; alternate. Lys-71 is covalently cross-linked (Glycyl lysine isopeptide (Lys-Gly) (interchain with G-Cter in SUMO2); alternate). Lys-71 participates in a covalent cross-link: Glycyl lysine isopeptide (Lys-Gly) (interchain with G-Cter in ubiquitin); alternate. Lys-99 is modified (N6-acetyllysine). 122-125 provides a ligand contact to GTP; it reads NKVD. Lys-134 carries the post-translational modification N6-acetyllysine. The residue at position 159 (Lys-159) is an N6-acetyllysine; alternate. An N6-succinyllysine; alternate modification is found at Lys-159.

This sequence belongs to the small GTPase superfamily. Ran family. In terms of tissue distribution, testis specific.

It localises to the nucleus. It catalyses the reaction GTP + H2O = GDP + phosphate + H(+). Functionally, GTP-binding protein involved in nucleocytoplasmic transport. Required for the import of protein into the nucleus and also for RNA export. Involved in chromatin condensation and control of cell cycle. The polypeptide is GTP-binding nuclear protein Ran, testis-specific isoform (Rasl2-9) (Mus musculus (Mouse)).